A 461-amino-acid chain; its full sequence is UDP-N-acetylmuramoylalanine--D-glutamate ligase (461 aa).

115-121 (GSNGKTT) provides a ligand contact to ATP.

It belongs to the MurCDEF family.

It is found in the cytoplasm. It carries out the reaction UDP-N-acetyl-alpha-D-muramoyl-L-alanine + D-glutamate + ATP = UDP-N-acetyl-alpha-D-muramoyl-L-alanyl-D-glutamate + ADP + phosphate + H(+). Its pathway is cell wall biogenesis; peptidoglycan biosynthesis. In terms of biological role, cell wall formation. Catalyzes the addition of glutamate to the nucleotide precursor UDP-N-acetylmuramoyl-L-alanine (UMA). The sequence is that of UDP-N-acetylmuramoylalanine--D-glutamate ligase from Acidobacterium capsulatum (strain ATCC 51196 / DSM 11244 / BCRC 80197 / JCM 7670 / NBRC 15755 / NCIMB 13165 / 161).